We begin with the raw amino-acid sequence, 954 residues long: MTQKFEMADRFNPSAVEQALYQHWEESGYFKPSENENAPSYCIAIPPPNVTGSLHMGHAFQQTLMDTLIRFNRMEGHNTLWQAGTDHAGIATQMVVERKIAAEEGKTRHDYGREAFINKIWDWKAYSGGTISQQMRRLGNSIDWERERFTMDDGLSNAVKEVFVRLHEEGLIYRGKRLVNWDPKLHTAISDLEVENKESKGSLWHFRYPLANGAKTADGKDYLVVATTRPETMLGDTAVAVHPEDERYQSLIGKTVVLPLANREIPIIADEYVDREFGTGVVKITPAHDFNDYEVGKRHNLPMVNVLTLNANIRDEAEIIGTDGKPLAGYEATIPADYRGLERFAARKKIVADFEALGLLDEIKPHDLKVPYGDRGGVPIEPMLTDQWYVSVKPLADVAIKAVEDGEIQFVPKQYENLYFSWMRDIQDWCISRQLWWGHRIPAWYDAEGNVYVARNEEEVRSKYNLDSAVELKQDEDVLDTWFSSGLWTFSTLGWPEQTKELKMFHPTDVLITGFDIIFFWVARMIMFTMHFVKDENGKPQVPFKTVYVTGLIRDEQGQKMSKSKGNVLDPIDMIDGISLEDLLEKRTGNMMQPQLAEKIAKATRKEFADGIAAHGTDALRFTLAALASNGRDINWDMKRLEGYRNFCNKLWNASRFVLTNEKLDLSEGEIEFSLADRWIQSEFNRTVETFRNSLSQYRFDLCANAIYEFTWNQFCDWYLELTKPVFANGNAAQIRAASQTLVHVLEKLLRLAHPLIPFITEEIWQKVKGFVGITADSIMLQPFPQVEENGFDLEAEAEIEWLKEVIVAVRNIRAESNIAPSKGLDLLFRNLSAENAKILEKQTALLKAMAKLDNVQVLAANEAAPLAVAKLVGNAELLVPMAGFINKEAELARLTKEIEKYQNEVKRIENKLSNESFVAKAPEAVIAKEREKQAEYQSGLEKIQEQYKAIEAL.

The 'HIGH' region signature appears at 48-58 (PNVTGSLHMGH). The 'KMSKS' region signature appears at 560-564 (KMSKS). K563 contacts ATP. Residues 883–953 (AGFINKEAEL…IQEQYKAIEA (71 aa)) adopt a coiled-coil conformation.

This sequence belongs to the class-I aminoacyl-tRNA synthetase family. ValS type 1 subfamily. In terms of assembly, monomer.

The protein resides in the cytoplasm. The enzyme catalyses tRNA(Val) + L-valine + ATP = L-valyl-tRNA(Val) + AMP + diphosphate. Catalyzes the attachment of valine to tRNA(Val). As ValRS can inadvertently accommodate and process structurally similar amino acids such as threonine, to avoid such errors, it has a 'posttransfer' editing activity that hydrolyzes mischarged Thr-tRNA(Val) in a tRNA-dependent manner. In Haemophilus influenzae (strain 86-028NP), this protein is Valine--tRNA ligase.